We begin with the raw amino-acid sequence, 100 residues long: Putative septation protein SpoVG (100 aa).

It belongs to the SpoVG family.

Functionally, could be involved in septation. The chain is Putative septation protein SpoVG from Clostridium novyi (strain NT).